We begin with the raw amino-acid sequence, 446 residues long: Probable D-serine dehydratase (446 aa).

At Lys-113 the chain carries N6-(pyridoxal phosphate)lysine.

It belongs to the serine/threonine dehydratase family. DsdA subfamily. Requires pyridoxal 5'-phosphate as cofactor.

The catalysed reaction is D-serine = pyruvate + NH4(+). The protein is Probable D-serine dehydratase of Burkholderia lata (strain ATCC 17760 / DSM 23089 / LMG 22485 / NCIMB 9086 / R18194 / 383).